A 155-amino-acid chain; its full sequence is uncharacterized protein (155 aa).

2 disordered regions span residues 24–63 and 80–155; these read RVGYREGPTVETKKIQPQLPDEDGNESDKEDEQPQVVVLK and KAAK…DENE. The span at 43 to 56 shows a compositional bias: acidic residues; the sequence is PDEDGNESDKEDEQ. The residue at position 50 (S50) is a Phosphoserine. Position 108 is an N6-acetyllysine (K108). Residues 128 to 147 are compositionally biased toward polar residues; it reads KQSPVRKNSQKQIKNSSLLS. Phosphoserine occurs at positions 130, 147, and 150.

This is an uncharacterized protein from Rattus norvegicus (Rat).